Here is a 359-residue protein sequence, read N- to C-terminus: Phosphate acyltransferase (359 aa).

It belongs to the PlsX family. In terms of assembly, homodimer. Probably interacts with PlsY.

The protein resides in the cytoplasm. The catalysed reaction is a fatty acyl-[ACP] + phosphate = an acyl phosphate + holo-[ACP]. The protein operates within lipid metabolism; phospholipid metabolism. Functionally, catalyzes the reversible formation of acyl-phosphate (acyl-PO(4)) from acyl-[acyl-carrier-protein] (acyl-ACP). This enzyme utilizes acyl-ACP as fatty acyl donor, but not acyl-CoA. This is Phosphate acyltransferase from Salmonella agona (strain SL483).